We begin with the raw amino-acid sequence, 832 residues long: pre-rRNA 2'-O-ribose RNA methyltransferase FTSJ3 (832 aa).

Residues Gly-56, Trp-58, Asp-76, Asp-92, and Asp-117 each coordinate S-adenosyl-L-methionine. Residue Lys-157 is the Proton acceptor of the active site. 3 disordered regions span residues 332-358 (INLSSGEEEEGREEEEKTSPKAAADEM), 485-523 (RLERERREQGVKRVKPKVEEEEEEEEEEENPLLVPLEEK), and 546-631 (DADE…GLVE). 2 stretches are compositionally biased toward basic and acidic residues: residues 345–358 (EEEKTSPKAAADEM) and 485–495 (RLERERREQGV). Positions 503–514 (EEEEEEEEEEEN) are enriched in acidic residues. Basic residues predominate over residues 570-579 (KTKKKGQKKK). Positions 600–618 (AEAEAEQSSDDDSSSDEEG) are enriched in acidic residues. Positions 726 to 758 (IKKVAEAKARKKRRMLKKMEQMKKKAEAVVSTV) form a coiled coil. The disordered stretch occupies residues 795–832 (GPRVRRPPGVKGQFKVVDSRLKKDVRAQKRKEQKKRRK). Residues 811-821 (VDSRLKKDVRA) show a composition bias toward basic and acidic residues. The span at 822 to 832 (QKRKEQKKRRK) shows a compositional bias: basic residues.

Belongs to the class I-like SAM-binding methyltransferase superfamily. RNA methyltransferase RlmE family. SPB1 subfamily. In terms of assembly, interacts with NIP7.

It localises to the nucleus. Its subcellular location is the nucleolus. The enzyme catalyses a ribonucleotide in rRNA + S-adenosyl-L-methionine = a 2'-O-methylribonucleotide in rRNA + S-adenosyl-L-homocysteine + H(+). In terms of biological role, RNA 2'-O-methyltransferase involved in the processing of the 34S pre-rRNA to 18S rRNA and in 40S ribosomal subunit formation. This Gallus gallus (Chicken) protein is pre-rRNA 2'-O-ribose RNA methyltransferase FTSJ3.